The chain runs to 442 residues: Citrate transporter CitP (442 aa).

Transmembrane regions (helical) follow at residues 27–47, 59–79, 83–103, 114–134, 151–171, 177–197, 209–229, 267–287, 293–313, 321–341, 349–369, 387–409, and 421–441; these read ISGIGLIAYAFMAVLLIIAIS, IFALVLMGHVFYYLGAHLPIF, LGGGSVFTILLTAILVATNVI, FINGMDFLGLYIVSLIASSLF, VAFISMALTAVVIGIVGVIIG, AILYIAMPIMAGGVGAGIVPL, SAGILSKLFPTVILGNLLAII, YVQLGVGLIIAVMFFMIGTML, GINAYAFIILSIVLTKAFGLL, VIMFGQVIVKNMTHALLAGVG, VLLAALSWQFVVLCLVSIVAI, AAITAGLANNSMGGTGNVAVLAA, and MGNRIGGALILVVAGILVTFM.

The protein belongs to the 2-hydroxycarboxylate transporter (2-HCT) (TC 2.A.24) family.

It is found in the cell membrane. The enzyme catalyses (R)-lactate(in) + citrate(out) = (R)-lactate(out) + citrate(in). It carries out the reaction (S)-lactate(in) + citrate(out) = (S)-lactate(out) + citrate(in). The catalysed reaction is citrate(in) + H(+)(in) = citrate(out) + H(+)(out). Its activity is regulated as follows. The transport of citrate is unaffected by the presence of citrate in the growth media. Functionally, secondary transporter involved in citrate metabolism. During cometabolism of citrate and glucose, catalyzes the uptake of divalent citrate into the cell coupled to the exit of monovalent lactate, the end product of glycolysis in L.lactis. The citrate/lactate exchange is electrogenic and results in the generation of a membrane potential. Plays an important role in resistance against lactate toxicity at low pH. In the absence of glucose, i.e. when no lactate is produced, CitP catalyzes the uptake of citrate in exchange with the citrate metabolism intermediates pyruvate and alpha-acetolactate, and the end product acetate. In the absence of glucose, CitP can also catalyze the proton-dependent transport of citrate. In vitro, shows a broad substrate specificity. Can transport a wide variety of mono- and dicarboxylates of the form X-CR(2)-COO(-), where X represents OH (2-hydroxy acid), O (2-keto acid), or H (acid) and R groups differ in size, hydrophobicity and composition. Many of the substrates are intermediates or products of amino acid metabolism, suggesting that CitP may have a broader physiological function than its role in citrate metabolism. In Lactococcus lactis subsp. lactis (Streptococcus lactis), this protein is Citrate transporter CitP.